A 180-amino-acid chain; its full sequence is Pituitary tumor-transforming gene 1 protein-interacting protein (180 aa).

The N-terminal stretch at 1–32 (MAPGVARGPTPYWRLRLGGAALLLLLIPVAAA) is a signal peptide. Topologically, residues 33–96 (QEPPGAACSQ…RWGVCWVNFE (64 aa)) are extracellular. The 54-residue stretch at 39–92 (ACSQNTNKTCEECLKNVSCLWCNTNKACLDYPVTSVLPPASLCKLSSARWGVCW) folds into the PSI domain. 2 N-linked (GlcNAc...) asparagine glycosylation sites follow: Asn-45 and Asn-54. The chain crosses the membrane as a helical span at residues 97–117 (ALIITMSVVGGTLLLGIAICC). The Cytoplasmic segment spans residues 118–180 (CCCCRRKRSR…ENPYARFENN (63 aa)). Positions 130-165 (DRSEEKAMREREERRIRQEERRAEMKTRHDEIRKKY) form a coiled coil. The interval 131–157 (RSEEKAMREREERRIRQEERRAEMKTR) is disordered. A Phosphotyrosine modification is found at Tyr-174.

Interacts with PTTG1. Ubiquitous.

It localises to the membrane. It is found in the cytoplasm. The protein resides in the nucleus. In terms of biological role, may facilitate PTTG1 nuclear translocation. The sequence is that of Pituitary tumor-transforming gene 1 protein-interacting protein (PTTG1IP) from Homo sapiens (Human).